The following is a 241-amino-acid chain: 1-(5-phosphoribosyl)-5-[(5-phosphoribosylamino)methylideneamino] imidazole-4-carboxamide isomerase (241 aa).

Asp8 acts as the Proton acceptor in catalysis. The active-site Proton donor is the Asp131.

The protein belongs to the HisA/HisF family.

It is found in the cytoplasm. The catalysed reaction is 1-(5-phospho-beta-D-ribosyl)-5-[(5-phospho-beta-D-ribosylamino)methylideneamino]imidazole-4-carboxamide = 5-[(5-phospho-1-deoxy-D-ribulos-1-ylimino)methylamino]-1-(5-phospho-beta-D-ribosyl)imidazole-4-carboxamide. It participates in amino-acid biosynthesis; L-histidine biosynthesis; L-histidine from 5-phospho-alpha-D-ribose 1-diphosphate: step 4/9. The protein is 1-(5-phosphoribosyl)-5-[(5-phosphoribosylamino)methylideneamino] imidazole-4-carboxamide isomerase of Sorangium cellulosum (strain So ce56) (Polyangium cellulosum (strain So ce56)).